A 545-amino-acid chain; its full sequence is Protein FAR1-RELATED SEQUENCE 9 (545 aa).

The FAR1 domain maps to 22-65; it reads LNYLKRRQLENPGFLYAIEDDCGNVFWADPTCRLNYTYFGDTLV. Positions 66-150 constitute an MULE domain; that stretch reads FDTTYRRGKR…RVFSQTRLRF (85 aa). The SWIM-type zinc-finger motif lies at 345 to 381; sequence HTVSFDSLEVKANCSCQMFEYSGIICRHILAVFSAKN. Residues 460–495 form a disordered region; it reads SNRTPGTRLPNGEAYPSEEARETANATNHPGGEKER. Residues 492 to 545 adopt a coiled-coil conformation; sequence EKERTILELTAELERTGQRCEVYRANLLSILRDMEEQKFQLSLKVQNARLSLKE.

Belongs to the FHY3/FAR1 family. Expressed in hypocotyls, rosette and cauline leaves, inflorescences stems, flowers and siliques.

It localises to the nucleus. In terms of biological role, putative transcription activator involved in regulating light control of development. May act as a negative regulator specific to phyB signaling. The sequence is that of Protein FAR1-RELATED SEQUENCE 9 (FRS9) from Arabidopsis thaliana (Mouse-ear cress).